A 559-amino-acid chain; its full sequence is MPSIKSDIEIARAAAKKPIFEIGAQLGIPVEQLAPYGHDKAKVSAEFIAAQAGRKDGKLILVTAINPTPAGEGKTTTTVGLGDGLNRIGKKAIICIREASLGPCFGVKGGAAGGGYAQVVPMEDINLHFTGDFHAITSAHNLLAAMIDNHIYWGNEENIDIRRIAWRRVMDMNDRALRSMVSSLGGVANGFPRQGGFDITVASEVMAILCLATDLKDLERRLGDIIIGYRFDKTPVHARDLKADGAMAVLLKDAMQPNLVQTLENNPAFVHGGPFANIAHGCNSVTATKTALKLGDYVVTEAGFGADLGAEKFFDIKCRKAGLRPDAAVIVATVRALKMNGGVKKEDLGTEDVAALKKGCANLGRHVANVRRFGVPVVVAINHFVSDTDAEIAAVKEFVSRLGAEAILCQHWAKGSAGIEELAHKVVELAESGQAKFHPLYGDDLSLFEKIEIIASKIYHAGEVTADKAVRDQLQSWEEQGYGKLPVCMAKTQYSFSTDPNLRGAPEGHIVSVREVRLSAGAGFVVAITGEIMTMPGLPKSPSAERIFLNDQGYIEGLF.

68–75 (TPAGEGKT) contributes to the ATP binding site.

Belongs to the formate--tetrahydrofolate ligase family.

The enzyme catalyses (6S)-5,6,7,8-tetrahydrofolate + formate + ATP = (6R)-10-formyltetrahydrofolate + ADP + phosphate. It participates in one-carbon metabolism; tetrahydrofolate interconversion. This is Formate--tetrahydrofolate ligase from Rhizobium etli (strain CIAT 652).